A 325-amino-acid polypeptide reads, in one-letter code: Putative gluconeogenesis factor (325 aa).

Belongs to the gluconeogenesis factor family.

The protein resides in the cytoplasm. Its function is as follows. Required for morphogenesis under gluconeogenic growth conditions. The protein is Putative gluconeogenesis factor of Streptococcus pneumoniae serotype 4 (strain ATCC BAA-334 / TIGR4).